The sequence spans 133 residues: Small ribosomal subunit protein uS8 (133 aa).

It belongs to the universal ribosomal protein uS8 family. Part of the 30S ribosomal subunit. Contacts proteins S5 and S12.

Its function is as follows. One of the primary rRNA binding proteins, it binds directly to 16S rRNA central domain where it helps coordinate assembly of the platform of the 30S subunit. This Leptospira borgpetersenii serovar Hardjo-bovis (strain JB197) protein is Small ribosomal subunit protein uS8.